Here is a 794-residue protein sequence, read N- to C-terminus: Inactive zinc metalloprotease C354.09c (794 aa).

The interval 1 to 56 (MTDEKHVYVPPPKDPPSYEEVALHSALNNSAPPNDGEQNETSMEEMEIIEPPSEDS) is disordered. Residues 91–111 (IPFQFLYLAVIATVIILASYY) form a helical membrane-spanning segment.

Belongs to the peptidase M28 family. M28B subfamily.

It is found in the membrane. This Schizosaccharomyces pombe (strain 972 / ATCC 24843) (Fission yeast) protein is Inactive zinc metalloprotease C354.09c.